A 170-amino-acid chain; its full sequence is Adenine phosphoribosyltransferase (170 aa).

This sequence belongs to the purine/pyrimidine phosphoribosyltransferase family. Homodimer.

It is found in the cytoplasm. The enzyme catalyses AMP + diphosphate = 5-phospho-alpha-D-ribose 1-diphosphate + adenine. The protein operates within purine metabolism; AMP biosynthesis via salvage pathway; AMP from adenine: step 1/1. Catalyzes a salvage reaction resulting in the formation of AMP, that is energically less costly than de novo synthesis. This Lysinibacillus sphaericus (strain C3-41) protein is Adenine phosphoribosyltransferase.